We begin with the raw amino-acid sequence, 367 residues long: Chorismate synthase (367 aa).

Residue Arg48 coordinates NADP(+). FMN contacts are provided by residues 125 to 127 (RSS), Gly284, 299 to 303 (KPTPS), and Arg325.

The protein belongs to the chorismate synthase family. As to quaternary structure, homotetramer. FMNH2 is required as a cofactor.

It catalyses the reaction 5-O-(1-carboxyvinyl)-3-phosphoshikimate = chorismate + phosphate. The protein operates within metabolic intermediate biosynthesis; chorismate biosynthesis; chorismate from D-erythrose 4-phosphate and phosphoenolpyruvate: step 7/7. In terms of biological role, catalyzes the anti-1,4-elimination of the C-3 phosphate and the C-6 proR hydrogen from 5-enolpyruvylshikimate-3-phosphate (EPSP) to yield chorismate, which is the branch point compound that serves as the starting substrate for the three terminal pathways of aromatic amino acid biosynthesis. This reaction introduces a second double bond into the aromatic ring system. This is Chorismate synthase from Lachnoclostridium phytofermentans (strain ATCC 700394 / DSM 18823 / ISDg) (Clostridium phytofermentans).